The following is a 229-amino-acid chain: Peptidase E (229 aa).

Catalysis depends on charge relay system residues Ser-120, Asp-135, and His-157.

It belongs to the peptidase S51 family.

The protein localises to the cytoplasm. The catalysed reaction is Dipeptidase E catalyzes the hydrolysis of dipeptides Asp-|-Xaa. It does not act on peptides with N-terminal Glu, Asn or Gln, nor does it cleave isoaspartyl peptides.. In terms of biological role, hydrolyzes dipeptides containing N-terminal aspartate residues. May play a role in allowing the cell to use peptide aspartate to spare carbon otherwise required for the synthesis of the aspartate family of amino acids. The chain is Peptidase E from Shigella flexneri serotype 5b (strain 8401).